Here is a 334-residue protein sequence, read N- to C-terminus: Protein POLAR-like 1 (334 aa).

Residues 53–63 (IRTSSEDDHHR) show a composition bias toward basic and acidic residues. The interval 53–74 (IRTSSEDDHHRVGQFSDSPPPT) is disordered. Residues 273 to 300 (ETRQQEEIKELEIALDDAKQRLHLKETE) adopt a coiled-coil conformation.

The protein resides in the cytoplasm. It is found in the cell cortex. Functionally, acts as a stomatal lineage scaffold which regulates subcellular localization and transient polarization of kinases (e.g. ASK7/BIN2 and ASK3/SK12) involved in asymmetric cell division (ACD) in a BASL-dependent manner. In Arabidopsis thaliana (Mouse-ear cress), this protein is Protein POLAR-like 1.